The primary structure comprises 149 residues: Large ribosomal subunit protein bL9 (149 aa).

This sequence belongs to the bacterial ribosomal protein bL9 family.

Functionally, binds to the 23S rRNA. This is Large ribosomal subunit protein bL9 from Haemophilus ducreyi (strain 35000HP / ATCC 700724).